A 300-amino-acid polypeptide reads, in one-letter code: Ribosomal protein bS6--L-glutamate ligase (300 aa).

Residues 104-287 (MQLLARQGID…IAGKMIRWIE (184 aa)) enclose the ATP-grasp domain. Residues lysine 141, 178-179 (EY), aspartate 187, and 211-213 (RSN) contribute to the ATP site. 3 residues coordinate Mg(2+): aspartate 248, glutamate 260, and asparagine 262. Residues aspartate 248, glutamate 260, and asparagine 262 each coordinate Mn(2+).

The protein belongs to the RimK family. Mg(2+) is required as a cofactor. The cofactor is Mn(2+).

Functionally, an L-glutamate ligase that catalyzes the ATP-dependent post-translational addition of glutamate residues to the C-terminus of ribosomal protein bS6 (RpsF). Is also able to catalyze the synthesis of poly-alpha-glutamate in vitro, via ATP hydrolysis from unprotected glutamate as substrate. The number of glutamate residues added to either RpsF or to poly-alpha-glutamate changes with pH. The polypeptide is Ribosomal protein bS6--L-glutamate ligase (Escherichia coli O7:K1 (strain IAI39 / ExPEC)).